Consider the following 669-residue polypeptide: MKFFVLVLLLVLQFFSNKALSQSEEGEFGFNGYLYDNSGIAITNSKGLMKLTNSSEFSYGHVFYNSPVRFKNSPNGTVSSFSTTFVFAIVSNVNALDGHGLAFVISPTKGLPYSSSSQYLGLFNLTNNGDPSNHIVAVEFDTFQNQEFDDMDNNHVGIDINSLSSEKASTAGYYEDDDGTFKNIRLINQKPIQAWIEYDSSRRQLNVTIHPIHLPKPKIPLLSLTKDLSPYLFDSMYVGFTSATGRLRSSHYILGWTFKLNGTASNIDISRLPKLPRDSRSTSVKKILAISLSLTSLAILVFLTISYMLFLKRKKLMEVLEDWEVQFGPHRFAYKDLYIATKGFRNSELLGKGGFGKVYKGTLSTSNMDIAVKKVSHDSRQGMREFVAEIATIGRLRHPNLVRLLGYCRRKGELYLVYDCMPKGSLDKFLYHQPEQSLDWSQRFKIIKDVASGLCYLHHQWVQVIIHRDIKPANVLLDDSMNGKLGDFGLAKLCEHGFDPQTSNVAGTFGYISPELSRTGKASTSSDVFAFGILMLEITCGRRPVLPRASSPSEMVLTDWVLDCWEDDILQVVDERVKQDDKYLEEQVALVLKLGLFCSHPVAAVRPSMSSVIQFLDGVAQLPNNLFDIVKARENVGAIEGFGEAAESLAEPCSVATLTFTEPFVSHGR.

The N-terminal stretch at M1 to S21 is a signal peptide. Residues Q22–K286 lie on the Extracellular side of the membrane. Positions S38–K259 are legume-lectin like. N53, N75, N124, N206, and N261 each carry an N-linked (GlcNAc...) asparagine glycan. Residues I287 to Y307 traverse the membrane as a helical segment. Residues M308–R669 are Cytoplasmic-facing. Residues F344 to A603 form the Protein kinase domain. ATP-binding positions include L350–V358 and K373. The active-site Proton acceptor is the D469.

This sequence in the C-terminal section; belongs to the protein kinase superfamily. Ser/Thr protein kinase family. In the N-terminal section; belongs to the leguminous lectin family.

Its subcellular location is the cell membrane. It catalyses the reaction L-seryl-[protein] + ATP = O-phospho-L-seryl-[protein] + ADP + H(+). The catalysed reaction is L-threonyl-[protein] + ATP = O-phospho-L-threonyl-[protein] + ADP + H(+). In Arabidopsis thaliana (Mouse-ear cress), this protein is L-type lectin-domain containing receptor kinase V.9 (LECRK59).